We begin with the raw amino-acid sequence, 505 residues long: Histidine ammonia-lyase (505 aa).

Positions 144–146 (ASG) form a cross-link, 5-imidazolinone (Ala-Gly). Residue Ser145 is modified to 2,3-didehydroalanine (Ser).

Belongs to the PAL/histidase family. In terms of processing, contains an active site 4-methylidene-imidazol-5-one (MIO), which is formed autocatalytically by cyclization and dehydration of residues Ala-Ser-Gly.

The protein localises to the cytoplasm. It carries out the reaction L-histidine = trans-urocanate + NH4(+). The protein operates within amino-acid degradation; L-histidine degradation into L-glutamate; N-formimidoyl-L-glutamate from L-histidine: step 1/3. This Legionella pneumophila (strain Corby) protein is Histidine ammonia-lyase.